The following is a 1437-amino-acid chain: Myomesin-3 (1437 aa).

Positions 1–49 are disordered; sequence MTLPHSLGGAGDPRPPQAMEVHRLEHRQEEEQKEERQHSLRMGSSVRRR. Residues 20–38 show a composition bias toward basic and acidic residues; the sequence is EVHRLEHRQEEEQKEERQH. Residues 120-149 are a coiled coil; it reads RLLRQRRDWKTLRRRTEEKVQEAKELRELC. Ig-like C2-type domains follow at residues 154–246 and 269–361; these read PWFW…AKVL and PSVE…TYVL. Fibronectin type-III domains lie at 375–469, 503–598, 604–696, 702–797, and 804–899; these read SPLN…VMGD, PPTN…LRGP, PPAQ…VKQA, APYG…CKEW, and PPYD…LEDK. Ig-like C2-type domains lie at 1120–1205 and 1334–1423; these read PYFE…LDLT and AKVV…VTIS.

Homodimer.

It localises to the cytoplasm. It is found in the myofibril. Its subcellular location is the sarcomere. The protein localises to the m line. In terms of biological role, may link the intermediate filament cytoskeleton to the M-disk of the myofibrils in striated muscle. The chain is Myomesin-3 (MYOM3) from Homo sapiens (Human).